Here is a 165-residue protein sequence, read N- to C-terminus: Myosin regulatory light chain 2B, cardiac muscle isoform (165 aa).

A N,N,N-trimethylalanine modification is found at alanine 2. 3 consecutive EF-hand domains span residues 23–58, 93–128, and 129–164; these read TQIQ…LGRL, DPEE…QEGR, and FSQE…GEEK. Ca(2+)-binding residues include aspartate 36, asparagine 38, aspartate 40, and aspartate 47.

Myosin is a hexamer of 2 heavy chains and 4 light chains. The N-terminus is blocked. N,N,N-trimethylalanine, found in other myosin light chains would not have been detected in the N-terminal tryptic peptide in PubMed:7319048 because it would remain trimethylated and ninhydrin negative after hydrolysis.

The protein is Myosin regulatory light chain 2B, cardiac muscle isoform of Gallus gallus (Chicken).